A 289-amino-acid polypeptide reads, in one-letter code: 4-diphosphocytidyl-2-C-methyl-D-erythritol kinase (289 aa).

K10 is a catalytic residue. 99–109 (PMGGGLGGGSS) lines the ATP pocket. Residue D141 is part of the active site.

It belongs to the GHMP kinase family. IspE subfamily. Homodimer.

The enzyme catalyses 4-CDP-2-C-methyl-D-erythritol + ATP = 4-CDP-2-C-methyl-D-erythritol 2-phosphate + ADP + H(+). The protein operates within isoprenoid biosynthesis; isopentenyl diphosphate biosynthesis via DXP pathway; isopentenyl diphosphate from 1-deoxy-D-xylulose 5-phosphate: step 3/6. In terms of biological role, catalyzes the phosphorylation of the position 2 hydroxy group of 4-diphosphocytidyl-2C-methyl-D-erythritol. The polypeptide is 4-diphosphocytidyl-2-C-methyl-D-erythritol kinase (Enterobacter sp. (strain 638)).